The primary structure comprises 229 residues: Potassium/proton antiporter CemA (229 aa).

A run of 4 helical transmembrane segments spans residues 7 to 27 (LIPLLYLASIVFLPWWISLSF), 114 to 134 (IICFVILSSYSILGNEELVIL), 154 to 174 (ILLLTDLCIGFHSPHGWELMI), and 189 to 209 (IISGLVSTFPVILDTILKYWI).

Belongs to the CemA family.

Its subcellular location is the plastid. The protein localises to the chloroplast inner membrane. The catalysed reaction is K(+)(in) + H(+)(out) = K(+)(out) + H(+)(in). Its function is as follows. Contributes to K(+)/H(+) antiport activity by supporting proton efflux to control proton extrusion and homeostasis in chloroplasts in a light-dependent manner to modulate photosynthesis. Prevents excessive induction of non-photochemical quenching (NPQ) under continuous-light conditions. Indirectly promotes efficient inorganic carbon uptake into chloroplasts. This chain is Potassium/proton antiporter CemA, found in Fagus sylvatica (Beechnut).